Here is a 295-residue protein sequence, read N- to C-terminus: Microcin B17-processing protein McbB (295 aa).

It is found in the cytoplasm. Its function is as follows. Necessary to process the inactive microcin B17 (McbA) precursor into the active peptide. This Escherichia coli protein is Microcin B17-processing protein McbB (mcbB).